Reading from the N-terminus, the 303-residue chain is Pyridoxal 5'-phosphate synthase subunit PdxS (303 aa).

D33 is a binding site for D-ribose 5-phosphate. K90 serves as the catalytic Schiff-base intermediate with D-ribose 5-phosphate. G162 contributes to the D-ribose 5-phosphate binding site. Residue R174 participates in D-glyceraldehyde 3-phosphate binding. Residues G223 and 244–245 (GS) each bind D-ribose 5-phosphate.

Belongs to the PdxS/SNZ family. As to quaternary structure, in the presence of PdxT, forms a dodecamer of heterodimers.

It catalyses the reaction aldehydo-D-ribose 5-phosphate + D-glyceraldehyde 3-phosphate + L-glutamine = pyridoxal 5'-phosphate + L-glutamate + phosphate + 3 H2O + H(+). It functions in the pathway cofactor biosynthesis; pyridoxal 5'-phosphate biosynthesis. Its function is as follows. Catalyzes the formation of pyridoxal 5'-phosphate from ribose 5-phosphate (RBP), glyceraldehyde 3-phosphate (G3P) and ammonia. The ammonia is provided by the PdxT subunit. Can also use ribulose 5-phosphate and dihydroxyacetone phosphate as substrates, resulting from enzyme-catalyzed isomerization of RBP and G3P, respectively. The polypeptide is Pyridoxal 5'-phosphate synthase subunit PdxS (Streptomyces coelicolor (strain ATCC BAA-471 / A3(2) / M145)).